The primary structure comprises 471 residues: ATP synthase subunit beta (471 aa).

Residue 156–163 (GGAGVGKT) coordinates ATP.

This sequence belongs to the ATPase alpha/beta chains family. In terms of assembly, F-type ATPases have 2 components, CF(1) - the catalytic core - and CF(0) - the membrane proton channel. CF(1) has five subunits: alpha(3), beta(3), gamma(1), delta(1), epsilon(1). CF(0) has three main subunits: a(1), b(2) and c(9-12). The alpha and beta chains form an alternating ring which encloses part of the gamma chain. CF(1) is attached to CF(0) by a central stalk formed by the gamma and epsilon chains, while a peripheral stalk is formed by the delta and b chains.

It localises to the cell membrane. The catalysed reaction is ATP + H2O + 4 H(+)(in) = ADP + phosphate + 5 H(+)(out). In terms of biological role, produces ATP from ADP in the presence of a proton gradient across the membrane. The catalytic sites are hosted primarily by the beta subunits. The sequence is that of ATP synthase subunit beta from Staphylococcus carnosus (strain TM300).